A 312-amino-acid polypeptide reads, in one-letter code: Apulose-4-phosphate transketolase subunit B (312 aa).

The protein belongs to the transketolase family. In terms of assembly, probable heterodimer composed of AptA and AptB. It depends on thiamine diphosphate as a cofactor.

It carries out the reaction apulose 4-phosphate + D-glyceraldehyde 3-phosphate = D-xylulose 5-phosphate + dihydroxyacetone phosphate. It participates in carbohydrate metabolism. In terms of biological role, involved in catabolism of D-apiose. Catalyzes the transfer of the glycolaldehyde group from apulose-4-phosphate to D-glyceraldehyde 3-phosphate, generating dihydroxyacetone phosphate and D-xylulose-5-phosphate. This is Apulose-4-phosphate transketolase subunit B from Phocaeicola vulgatus (strain ATCC 8482 / DSM 1447 / JCM 5826 / CCUG 4940 / NBRC 14291 / NCTC 11154) (Bacteroides vulgatus).